Consider the following 640-residue polypeptide: MADVAHQETHGFQTEVKQLLQLMIHSLYSNKEIFLRELVSNAADAADKLRFKALSNDSLYEGDGDLCVKLSIDKDAGSITISDNGIGMDRASVIEHLGTIAKSGTSEFFSNLSGDQAKDSQLIGQFGVGFYSAFIVAEKVVVRSRAAGDDASKGVEWTSEGEGEFTVADIEKADRGTEITLFLREDEKEFADDWRLRSIVSKYSDHISIPVMMYKEEVPESDGPDGEKVPAQPAKWEAVNKATALWTRDKSEVSDEEYKEFYKHISHDFADPLVWSHNKVEGKTEYNSLLYIPAKAPFDMWNRDQKHGLKLYVQRVFIMDDAEQFMPTYLRFVKGLLDSNDLPLNVSREILQDNKITQAIRQGCTKRVLQMLERVAKNDSEKYQGFWAEFGNVLKEGPAEDHANKEKVAGLLRFASTENDSDAQNVSLADYVSRMKDGQDKIYYITADSYKAAKSSPHLEIFRKKGIEVLLMSDRVDEWLMSHLTEFDEKSFQSITHGELDLGDLDDEDSKKAQEEAEKQVEGLTERVKTVLGDKVAEVKFTHRLTDSPACIVADGTGMSTQMIKLMQAAGQPVPEAKYHFELNPEHSLVKMLADEQDEERFGQWTEVLFDQAALSEQGSLKDPAAFVHNLNTLLMNLAK.

Positions 1–348 (MADVAHQETH…SNDLPLNVSR (348 aa)) are a; substrate-binding. Positions 349–565 (EILQDNKITQ…GTGMSTQMIK (217 aa)) are b. Positions 566 to 640 (LMQAAGQPVP…LNTLLMNLAK (75 aa)) are c.

Belongs to the heat shock protein 90 family. In terms of assembly, homodimer.

It is found in the cytoplasm. In terms of biological role, molecular chaperone. Has ATPase activity. The protein is Chaperone protein HtpG of Pseudoalteromonas atlantica (strain T6c / ATCC BAA-1087).